The sequence spans 139 residues: Nucleoside diphosphate kinase (139 aa).

Residues lysine 11, phenylalanine 59, arginine 87, threonine 93, arginine 104, and asparagine 114 each contribute to the ATP site. Residue histidine 117 is the Pros-phosphohistidine intermediate of the active site.

The protein belongs to the NDK family. As to quaternary structure, homotetramer. Mg(2+) serves as cofactor.

It localises to the cytoplasm. The catalysed reaction is a 2'-deoxyribonucleoside 5'-diphosphate + ATP = a 2'-deoxyribonucleoside 5'-triphosphate + ADP. The enzyme catalyses a ribonucleoside 5'-diphosphate + ATP = a ribonucleoside 5'-triphosphate + ADP. Functionally, major role in the synthesis of nucleoside triphosphates other than ATP. The ATP gamma phosphate is transferred to the NDP beta phosphate via a ping-pong mechanism, using a phosphorylated active-site intermediate. The polypeptide is Nucleoside diphosphate kinase (Flavobacterium psychrophilum (strain ATCC 49511 / DSM 21280 / CIP 103535 / JIP02/86)).